A 57-amino-acid polypeptide reads, in one-letter code: COP9 signalosome complex subunit 9 (57 aa).

It belongs to the CSN9 family. In terms of assembly, component of the CSN complex, probably composed of cops1, cops2, cops3, cops4, cops5, cops6, cops7, cops8 and cops9.

The protein localises to the nucleus. The protein resides in the cytoplasm. It is found in the nucleoplasm. Functionally, component of the COP9 signalosome complex (CSN), a complex involved in various cellular and developmental processes. The CSN complex is an essential regulator of the ubiquitin (Ubl) conjugation pathway by mediating the deneddylation of the cullin subunits of SCF-type E3 ligase complexes, leading to decrease the Ubl ligase activity. May play a role in cell proliferation. The polypeptide is COP9 signalosome complex subunit 9 (Danio rerio (Zebrafish)).